Reading from the N-terminus, the 253-residue chain is Isoprenyl transferase (253 aa).

Asp-32 is an active-site residue. Asp-32 lines the Mg(2+) pocket. Residues 33–36 (GNGR), Trp-37, Arg-45, His-49, and 77–79 (STE) each bind substrate. Asn-80 serves as the catalytic Proton acceptor. Substrate is bound by residues Trp-81, Arg-83, Arg-200, and 206 to 208 (RLS). A Mg(2+)-binding site is contributed by Glu-219.

This sequence belongs to the UPP synthase family. Homodimer. It depends on Mg(2+) as a cofactor.

Its function is as follows. Catalyzes the condensation of isopentenyl diphosphate (IPP) with allylic pyrophosphates generating different type of terpenoids. The protein is Isoprenyl transferase of Clostridium perfringens (strain 13 / Type A).